We begin with the raw amino-acid sequence, 297 residues long: Phosphoribosylaminoimidazole-succinocarboxamide synthase (297 aa).

It belongs to the SAICAR synthetase family.

The enzyme catalyses 5-amino-1-(5-phospho-D-ribosyl)imidazole-4-carboxylate + L-aspartate + ATP = (2S)-2-[5-amino-1-(5-phospho-beta-D-ribosyl)imidazole-4-carboxamido]succinate + ADP + phosphate + 2 H(+). The protein operates within purine metabolism; IMP biosynthesis via de novo pathway; 5-amino-1-(5-phospho-D-ribosyl)imidazole-4-carboxamide from 5-amino-1-(5-phospho-D-ribosyl)imidazole-4-carboxylate: step 1/2. The sequence is that of Phosphoribosylaminoimidazole-succinocarboxamide synthase from Mycobacterium tuberculosis (strain ATCC 25177 / H37Ra).